The chain runs to 179 residues: Putative BPIFA4P protein (179 aa).

Positions 1–20 (MLNVSGLFVLLCGLLVSSSA) are cleaved as a signal peptide.

Belongs to the BPI/LBP/Plunc superfamily. Plunc family. In terms of tissue distribution, expressed in breast cancer and salivary gland.

It is found in the secreted. In terms of biological role, major protein in sweat, has surfactant properties. This Homo sapiens (Human) protein is Putative BPIFA4P protein (BPIFA4P).